The sequence spans 199 residues: NAD(P)H dehydrogenase (quinone) (199 aa).

In terms of domain architecture, Flavodoxin-like spans 4-190 (VLVLYYSAYG…AGARYQGKTI (187 aa)). FMN-binding positions include 10-15 (SAYGHI) and 78-80 (TRF). An NAD(+)-binding site is contributed by Tyr-12. Trp-98 provides a ligand contact to substrate. FMN is bound by residues 113 to 119 (STATQHG) and His-134.

It belongs to the WrbA family. The cofactor is FMN.

It catalyses the reaction a quinone + NADH + H(+) = a quinol + NAD(+). It carries out the reaction a quinone + NADPH + H(+) = a quinol + NADP(+). The sequence is that of NAD(P)H dehydrogenase (quinone) from Rhodopseudomonas palustris (strain HaA2).